The chain runs to 371 residues: 4-hydroxy-3-methylbut-2-en-1-yl diphosphate synthase (flavodoxin) (371 aa).

[4Fe-4S] cluster contacts are provided by Cys270, Cys273, Cys305, and Glu312.

The protein belongs to the IspG family. [4Fe-4S] cluster is required as a cofactor.

It catalyses the reaction (2E)-4-hydroxy-3-methylbut-2-enyl diphosphate + oxidized [flavodoxin] + H2O + 2 H(+) = 2-C-methyl-D-erythritol 2,4-cyclic diphosphate + reduced [flavodoxin]. Its pathway is isoprenoid biosynthesis; isopentenyl diphosphate biosynthesis via DXP pathway; isopentenyl diphosphate from 1-deoxy-D-xylulose 5-phosphate: step 5/6. Its function is as follows. Converts 2C-methyl-D-erythritol 2,4-cyclodiphosphate (ME-2,4cPP) into 1-hydroxy-2-methyl-2-(E)-butenyl 4-diphosphate. The sequence is that of 4-hydroxy-3-methylbut-2-en-1-yl diphosphate synthase (flavodoxin) from Shewanella sp. (strain ANA-3).